A 399-amino-acid chain; its full sequence is Peroxisome assembly protein 12 (399 aa).

Residues 1–24 form a disordered region; the sequence is MSFYSNLPSAGQSSRGSSTSGRNG. Topologically, residues 1 to 33 are peroxisomal matrix; it reads MSFYSNLPSAGQSSRGSSTSGRNGVGLEPLYPT. A compositionally biased stretch (low complexity) spans 9–24; it reads SAGQSSRGSSTSGRNG. The helical transmembrane segment at 34 to 62 threads the bilayer; the sequence is IFEIMSSQEIDSLLPASIRYLLANHLVAN. Residues 63-67 are Cytoplasmic-facing; sequence FPNRY. A helical membrane pass occupies residues 68–92; sequence TLRLNKYFFEWFQAIKGFVEWYHLK. Over 93 to 136 the chain is Peroxisomal matrix; the sequence is TYNSTFIDRFYGLQLFSSRDRNLALTQCLNPKGQSEWPQGLQLN. Residues 137–168 traverse the membrane as a helical segment; that stretch reads QQQKSVIFLEKIILPYITAKLDEILEKISMNN. Topologically, residues 169-171 are cytoplasmic; sequence IFS. The helical transmembrane segment at 172 to 208 threads the bilayer; it reads SDETENKWPKRAFLRIYPFIKKLLALSNLLVKLLFLT. Over 209 to 277 the chain is Peroxisomal matrix; it reads KRTGSVSLLQ…PRFLTFMGSQ (69 aa). A helical transmembrane segment spans residues 278–305; sequence FFPTFIFVLRVYQWWTTQDMTTKLQKRV. Over 306–399 the chain is Cytoplasmic; sequence NDLDEDIPRP…VVTGIRKLLI (94 aa). Zn(2+)-binding residues include C334, C337, C354, and C357. An RING-type; degenerate zinc finger spans residues 334 to 373; it reads CPVCEKTVQNPCVLETGYVACYPCAISYLVNNEGHCPVTN.

It belongs to the pex2/pex10/pex12 family. As to quaternary structure, component of the PEX2-PEX10-PEX12 retrotranslocation channel, composed of PEX2, PEX10 and PEX12.

The protein localises to the peroxisome membrane. It functions in the pathway protein modification; protein ubiquitination. Functionally, component of a retrotranslocation channel required for peroxisome organization by mediating export of the PEX5 receptor from peroxisomes to the cytosol, thereby promoting PEX5 recycling. The retrotranslocation channel is composed of PEX2, PEX10 and PEX12; each subunit contributing transmembrane segments that coassemble into an open channel that specifically allows the passage of PEX5 through the peroxisomal membrane. PEX12 also regulates PEX5 recycling by activating the E3 ubiquitin-protein ligase activity of PEX10. When PEX5 recycling is compromised, PEX12 stimulates PEX10-mediated polyubiquitination of PEX5, leading to its subsequent degradation. The chain is Peroxisome assembly protein 12 from Saccharomyces cerevisiae (strain ATCC 204508 / S288c) (Baker's yeast).